The chain runs to 653 residues: UvrABC system protein C (653 aa).

One can recognise a GIY-YIG domain in the interval 44 to 122 (NAPGVYRMVN…IKRLRPRFNV (79 aa)). The UVR domain occupies 232–267 (STVKAEIATAMQEASQALDFERAAIYRDRLAALSHV).

It belongs to the UvrC family. As to quaternary structure, interacts with UvrB in an incision complex.

Its subcellular location is the cytoplasm. In terms of biological role, the UvrABC repair system catalyzes the recognition and processing of DNA lesions. UvrC both incises the 5' and 3' sides of the lesion. The N-terminal half is responsible for the 3' incision and the C-terminal half is responsible for the 5' incision. In Chelativorans sp. (strain BNC1), this protein is UvrABC system protein C.